Here is a 183-residue protein sequence, read N- to C-terminus: Secreted RxLR effector protein 41 (183 aa).

The signal sequence occupies residues 1–18; sequence MLGFVTGVLAISAHVIVS. Positions 41–65 match the RxLR-dEER motif; it reads RRLRSYETDTASARAEEGTSDIEER. Residue N88 is glycosylated (N-linked (GlcNAc...) asparagine).

It belongs to the RxLR effector family.

It is found in the secreted. The protein resides in the host nucleus. It localises to the host cytoplasm. Secreted effector that dos not suppress the host cell death induced by cell death-inducing proteins. This Plasmopara viticola (Downy mildew of grapevine) protein is Secreted RxLR effector protein 41.